Consider the following 173-residue polypeptide: Peptidoglycan-associated lipoprotein (173 aa).

A signal peptide spans 1-21; sequence MQLNKVLKGLMIALPVMAIAA. Residue Cys22 is the site of N-palmitoyl cysteine attachment. Cys22 carries the S-diacylglycerol cysteine lipid modification. The interval 30-58 is disordered; sequence NDGSEGMLGAGTGMDANGGNGNMSSEEQA. Residues 35 to 50 are compositionally biased toward gly residues; the sequence is GMLGAGTGMDANGGNG. Residues 60-173 enclose the OmpA-like domain; that stretch reads LQMQQLQQNN…SKNRRAVLVY (114 aa).

It belongs to the Pal lipoprotein family. The Tol-Pal system is composed of five core proteins: the inner membrane proteins TolA, TolQ and TolR, the periplasmic protein TolB and the outer membrane protein Pal. They form a network linking the inner and outer membranes and the peptidoglycan layer.

Its subcellular location is the cell outer membrane. Its function is as follows. Part of the Tol-Pal system, which plays a role in outer membrane invagination during cell division and is important for maintaining outer membrane integrity. This Escherichia coli O157:H7 protein is Peptidoglycan-associated lipoprotein.